The sequence spans 195 residues: Nucleoside triphosphate pyrophosphatase (195 aa).

The active-site Proton acceptor is the aspartate 70.

It belongs to the Maf family. It depends on a divalent metal cation as a cofactor.

Its subcellular location is the cytoplasm. The enzyme catalyses a ribonucleoside 5'-triphosphate + H2O = a ribonucleoside 5'-phosphate + diphosphate + H(+). It carries out the reaction a 2'-deoxyribonucleoside 5'-triphosphate + H2O = a 2'-deoxyribonucleoside 5'-phosphate + diphosphate + H(+). Its function is as follows. Nucleoside triphosphate pyrophosphatase. May have a dual role in cell division arrest and in preventing the incorporation of modified nucleotides into cellular nucleic acids. The protein is Nucleoside triphosphate pyrophosphatase of Cyanothece sp. (strain PCC 7425 / ATCC 29141).